The chain runs to 280 residues: Large ribosomal subunit protein uL2 (280 aa).

2 disordered regions span residues 1–58 and 226–280; these read MAIR…GGGH and MNPV…KHGR. Composition is skewed to basic residues over residues 37–58 and 268–280; these read LHGH…GGGH and IVRR…KHGR.

This sequence belongs to the universal ribosomal protein uL2 family. Part of the 50S ribosomal subunit. Forms a bridge to the 30S subunit in the 70S ribosome.

Its function is as follows. One of the primary rRNA binding proteins. Required for association of the 30S and 50S subunits to form the 70S ribosome, for tRNA binding and peptide bond formation. It has been suggested to have peptidyltransferase activity; this is somewhat controversial. Makes several contacts with the 16S rRNA in the 70S ribosome. The sequence is that of Large ribosomal subunit protein uL2 from Mycobacterium avium (strain 104).